The sequence spans 569 residues: Urease subunit alpha (569 aa).

Residues 131–569 enclose the Urease domain; sequence GSIDTHIHFI…VPMAQKYFLL (439 aa). Residues His-136, His-138, and Lys-219 each coordinate Ni(2+). Position 219 is an N6-carboxylysine (Lys-219). His-221 lines the substrate pocket. Positions 248 and 274 each coordinate Ni(2+). The Proton donor role is filled by His-322. Asp-362 lines the Ni(2+) pocket.

Belongs to the metallo-dependent hydrolases superfamily. Urease alpha subunit family. In terms of assembly, heterotrimer of UreA (gamma), UreB (beta) and UreC (alpha) subunits. Two heterotrimers associate to form the active enzyme. In most bacteria it is thought that three heterotrimers form the active enzyme. Requires Ni cation as cofactor. Post-translationally, carboxylation allows a single lysine to coordinate two nickel ions.

The protein resides in the cytoplasm. It carries out the reaction urea + 2 H2O + H(+) = hydrogencarbonate + 2 NH4(+). The protein operates within nitrogen metabolism; urea degradation; CO(2) and NH(3) from urea (urease route): step 1/1. With respect to regulation, inhibited by HgCl2 and acetohydroxyamic acid slightly by EDTA, but not by boric acid or L-methionine-DL-sulfoximine. The protein is Urease subunit alpha of Prochlorococcus marinus subsp. pastoris (strain PCC 9511).